The primary structure comprises 379 residues: MSQNTSVGIVTPQKIPFEMPLVLENGKTLPRFDLMIETYGELNAEKNNAVLICHALSGNHHVAGRHSAEDKYTGWWDNMVGPGKPIDTERFFVVGLNNLGGCDGSSGPLSINPETGREYGADFPMVTVKDWVKSQAALADYLGIEQWAAVVGGSLGGMQALQWAISYPERVRHALVIASAPKLSAQNIAFNDVARQAILTDPDFNEGHYRSHNTVPARGLRIARMMGHITYLAEDGLGKKFGRDLRSNGYQYGYSVEFEVESYLRYQGDKFVGRFDANTYLLMTKALDYFDPAADFGNSLTRAVQDVQAKFFVASFSTDWRFAPERSHELVKALIAAQKSVQYIEVKSAHGHDAFLMEDEAYMRAVTAYMNNVDKDCRL.

An AB hydrolase-1 domain is found at 48–357 (NAVLICHALS…SAHGHDAFLM (310 aa)). Ser-154 (nucleophile) is an active-site residue. Position 224 (Arg-224) interacts with substrate. Residues Asp-319 and His-352 contribute to the active site. Substrate is bound at residue Asp-353.

The protein belongs to the AB hydrolase superfamily. MetX family. As to quaternary structure, homodimer.

Its subcellular location is the cytoplasm. It catalyses the reaction L-homoserine + succinyl-CoA = O-succinyl-L-homoserine + CoA. Its pathway is amino-acid biosynthesis; L-methionine biosynthesis via de novo pathway; O-succinyl-L-homoserine from L-homoserine: step 1/1. Transfers a succinyl group from succinyl-CoA to L-homoserine, forming succinyl-L-homoserine. This is Homoserine O-succinyltransferase from Neisseria gonorrhoeae (strain ATCC 700825 / FA 1090).